Consider the following 395-residue polypeptide: Putative 8-amino-7-oxononanoate synthase (395 aa).

Substrate is bound at residue arginine 23. Pyridoxal 5'-phosphate is bound at residue 110–111; sequence GY. Histidine 135 serves as a coordination point for substrate. Pyridoxal 5'-phosphate is bound by residues serine 182, 207-210, and 239-242; these read DEAH and TFSK. Lysine 242 carries the N6-(pyridoxal phosphate)lysine modification. A substrate-binding site is contributed by threonine 356.

It belongs to the class-II pyridoxal-phosphate-dependent aminotransferase family. BioF subfamily. In terms of assembly, homodimer. It depends on pyridoxal 5'-phosphate as a cofactor.

The catalysed reaction is 6-carboxyhexanoyl-[ACP] + L-alanine + H(+) = (8S)-8-amino-7-oxononanoate + holo-[ACP] + CO2. It functions in the pathway cofactor biosynthesis; biotin biosynthesis. Catalyzes the decarboxylative condensation of pimeloyl-[acyl-carrier protein] and L-alanine to produce 8-amino-7-oxononanoate (AON), [acyl-carrier protein], and carbon dioxide. This chain is Putative 8-amino-7-oxononanoate synthase (bioF), found in Bacillus cereus (strain ATCC 10987 / NRS 248).